The chain runs to 384 residues: Thylakoid membrane protein TERC, chloroplastic (384 aa).

The transit peptide at 1–48 directs the protein to the chloroplast; it reads MSLASVIHHGILPPAKSDRIFLTIPVFPPDFRARGWTKSPFSLLINPS. At 49 to 115 the chain is on the stromal side; the sequence is LASAANRRLS…DYQQEETYKT (67 aa). The segment at 68–104 is disordered; the sequence is GIDQEDEEKESRELLPHKNDENATTSRSSSSVDSGGL. Positions 76-88 are enriched in basic and acidic residues; that stretch reads KESRELLPHKNDE. The helical transmembrane segment at 116-136 threads the bilayer; the sequence is SFKTVALCVGTAVAFGIGIGL. Residues 137–145 are Lumenal, thylakoid-facing; it reads KEGVGKASE. Residues 146-166 form a helical membrane-spanning segment; it reads FFAGYILEQSLSVDNLFVFVL. The Stromal portion of the chain corresponds to 167-180; that stretch reads VFKYFKVPLMYQNK. A helical membrane pass occupies residues 181–201; sequence VLTYGIAGAIVFRFTLILLGT. Residues 202–206 lie on the Lumenal, thylakoid side of the membrane; the sequence is ATLQK. Residues 207 to 227 traverse the membrane as a helical segment; sequence FEAVNLLLAAVLLYSSFKLFA. Residues 228-275 are Stromal-facing; the sequence is SEEDDTDLSDNFIVKTCQRFIPVTSSYDGNRFFTKHDGILKATPLLLT. A helical membrane pass occupies residues 276-296; the sequence is VAVIELSDIAFAVDSIPAVFG. Topologically, residues 297-301 are lumenal, thylakoid; that stretch reads VTRDP. A helical transmembrane segment spans residues 302 to 322; the sequence is FIVLTSNLFAILGLRSLYTLI. The Stromal portion of the chain corresponds to 323–335; the sequence is SEGMDELEYLQPS. The chain crosses the membrane as a helical span at residues 336-356; that stretch reads IAVVLGFIGVKMILDFFGFHI. S357 is a topological domain (lumenal, thylakoid). The helical transmembrane segment at 358 to 378 threads the bilayer; the sequence is TEASLGVVALSLSTGVLLSLT. Residues 379 to 384 lie on the Stromal side of the membrane; the sequence is NKSSDS.

Interacts with ALB3. As to expression, expressed in roots, rosette and cauline leaves, stems and flowers.

The protein localises to the plastid. It is found in the chloroplast thylakoid membrane. Integral thylakoid membrane protein that plays a crucial role in thylakoid membrane biogenesis and thylakoid formation in early chloroplast development. Is essential for de novo synthesis of photosystem II (PSII) core proteins and required for efficient insertion of thylakoid membrane proteins, presumably via interaction with ALB3. May assist synthesis of thylakoid membrane proteins at the membrane insertion step. The protein is Thylakoid membrane protein TERC, chloroplastic of Arabidopsis thaliana (Mouse-ear cress).